The primary structure comprises 448 residues: Doublesex- and mab-3-related transcription factor A2 (448 aa).

The segment at residues 57–104 is a DNA-binding region (DM); sequence CARCRNHGVVSALKGHKRYCRWKDCMCAKCTLIAERQRVMAAQVALRR. Positions 166-187 are enriched in polar residues; sequence SQLSGSATPQQSVGKPASTESD. Positions 166–259 are disordered; that stretch reads SQLSGSATPQ…SPSSAASRHM (94 aa). Over residues 229–239 the composition is skewed to low complexity; sequence GSVSSLGSDSG. Positions 259–294 constitute a DMA domain; it reads MNAIDILTRVFPSHKRSVQELVLQGCGKDVVRAIEQ.

It belongs to the DMRT family.

The protein localises to the nucleus. Functionally, may be involved in sexual development. The polypeptide is Doublesex- and mab-3-related transcription factor A2 (dmrta2) (Monopterus albus (Swamp eel)).